The following is a 450-amino-acid chain: MFTLTKALEKALLQHFIYMKVNIAYAINKSFPFFETLRDNSFITERMYKESLEACQNLVPLSKVVHNILTSLEQTFQPSVLLTLFSQVNLREYPSLVAIFRSFRNVGYTYEEKNRPPPTLLEDLANPAEGCSLQTLLPPPRPQLSLPSHLSSAPRVCDPRATAQPITEILDEQPSPSPQAVPLPGCIQEGKTIPVSSRDHQRKDKEDSREMPHSPSGPESVVKDDSPAANDLEMAQEVLCTPANKKARRKKRLNWSNSKRGRQKKKPRQDEMMGVASPGHGVQEKIKAVVSRRTLWKDDSSTNVKEVTKILRARMRCAQTSNSQEISKEASKTSGRKRHGKRTSTAGKTTQVPGKTKNDAVDFLSPTFPVTCGKANGTLFQEKLKQGVSKKCIQNEAGDWLTVKEFLNEGRRATSKDWKKAIRCNGETLRQLEQKGLLFCTKSKPQKKGA.

An HSR domain is found at 1–108 (MFTLTKALEK…IFRSFRNVGY (108 aa)). 2 disordered regions span residues 131–156 (CSLQ…APRV) and 170–225 (LDEQ…VKDD). Residues 143-154 (QLSLPSHLSSAP) show a composition bias toward low complexity. 2 positions are modified to phosphoserine: serine 175 and serine 177. The span at 197–212 (SRDHQRKDKEDSREMP) shows a compositional bias: basic and acidic residues. Serine 226 is modified (phosphoserine). Disordered stretches follow at residues 238-283 (VLCT…HGVQ) and 318-360 (AQTS…KNDA). Basic residues predominate over residues 245–267 (KKARRKKRLNWSNSKRGRQKKKP). The Nuclear localization signal signature appears at 251–266 (KRLNWSNSKRGRQKKK). The segment covering 343–353 (TSTAGKTTQVP) has biased composition (polar residues). One can recognise an SAND domain in the interval 358-439 (NDAVDFLSPT…RQLEQKGLLF (82 aa)).

The protein resides in the nucleus. This chain is Interferon-induced protein 75 (Ifi75), found in Mus caroli (Ryukyu mouse).